A 209-amino-acid chain; its full sequence is E3 ubiquitin-protein ligase RNF138 (209 aa).

An RING-type zinc finger spans residues 18 to 58 (CPVCQEVLKTPVRTAACQHVFCRKCFLTAMRESGIHCPLCR). Zn(2+) is bound by residues Cys-86, Cys-89, His-101, and Cys-105. Residues 86–105 (CRCCSKKIKFYRMRHHYKSC) form a C2HC RNF-type zinc finger. A disordered region spans residues 125–154 (QDSVRSSNRSETSASDNTETYQEDTSSSGH). Position 142 is a phosphothreonine (Thr-142). The segment at 157–180 (FKCPLCQESNFTRQRLLDHCNSNH) adopts a C2H2-type zinc-finger fold. The UIM domain occupies 189 to 207 (LQLDEETQYQTAVEESFQV).

In terms of assembly, interacts with NLK. Interacts with XRCC5/Ku80. Interacts with RBBP8/CtIP. Auto-ubiquitinated.

It is found in the chromosome. It carries out the reaction S-ubiquitinyl-[E2 ubiquitin-conjugating enzyme]-L-cysteine + [acceptor protein]-L-lysine = [E2 ubiquitin-conjugating enzyme]-L-cysteine + N(6)-ubiquitinyl-[acceptor protein]-L-lysine.. Its pathway is protein modification; protein ubiquitination. Its function is as follows. E3 ubiquitin-protein ligase involved in DNA damage response by promoting DNA resection and homologous recombination. Recruited to sites of double-strand breaks following DNA damage and specifically promotes double-strand break repair via homologous recombination. Two different, non-exclusive, mechanisms have been proposed. According to a report, regulates the choice of double-strand break repair by favoring homologous recombination over non-homologous end joining (NHEJ): acts by mediating ubiquitination of XRCC5/Ku80, leading to remove the Ku complex from DNA breaks, thereby promoting homologous recombination. According to another report, cooperates with UBE2Ds E2 ubiquitin ligases (UBE2D1, UBE2D2, UBE2D3 or UBE2D4) to promote homologous recombination by mediating ubiquitination of RBBP8/CtIP. Together with NLK, involved in the ubiquitination and degradation of TCF/LEF. Also exhibits auto-ubiquitination activity in combination with UBE2K. May act as a negative regulator in the Wnt/beta-catenin-mediated signaling pathway. The sequence is that of E3 ubiquitin-protein ligase RNF138 from Rattus norvegicus (Rat).